The primary structure comprises 107 residues: Anaphase-promoting complex subunit 14 (107 aa).

The APC/C is composed of at least 13 subunits: apc1, apc2, nuc2, apc4, apc5, cut9, apc8, apc10, apc11, hcn1, apc13, apc14 and apc15.

The protein localises to the ascus epiplasm. Component of the anaphase promoting complex/cyclosome (APC/C), a cell cycle-regulated E3 ubiquitin-protein ligase complex that controls progression through mitosis and the G1 phase of the cell cycle. The APC/C is thought to confer substrate specificity and, in the presence of ubiquitin-conjugating E2 enzymes, it catalyzes the formation of protein-ubiquitin conjugates that are subsequently degraded by the 26S proteasome. Appears to play a role in spore wall formation. This chain is Anaphase-promoting complex subunit 14, found in Schizosaccharomyces pombe (strain 972 / ATCC 24843) (Fission yeast).